Reading from the N-terminus, the 190-residue chain is Inner membrane-spanning protein YciB (190 aa).

6 helical membrane passes run 3–23 (FLFD…AGIY), 24–44 (VATT…WFKH), 49–69 (AMQW…LIFH), 76–96 (WKPT…VVVV), 121–141 (LVWA…AYNF), and 149–169 (FKLF…SVWL).

Belongs to the YciB family.

The protein localises to the cell inner membrane. Plays a role in cell envelope biogenesis, maintenance of cell envelope integrity and membrane homeostasis. The chain is Inner membrane-spanning protein YciB from Ralstonia pickettii (strain 12J).